The primary structure comprises 824 residues: LPS-assembly protein LptD (824 aa).

Disordered regions lie at residues 1 to 26 (MTEQRRSPHHPATRPPAPPGTSRRVR) and 67 to 117 (TQTP…PAYV). A signal peptide spans 1–48 (MTEQRRSPHHPATRPPAPPGTSRRVRLPASALRPLVLAMAGLTVSAHA). The span at 98–115 (NTLNLSPSSTPSNPNAPA) shows a compositional bias: low complexity.

This sequence belongs to the LptD family. Component of the lipopolysaccharide transport and assembly complex. Interacts with LptE and LptA.

The protein resides in the cell outer membrane. In terms of biological role, together with LptE, is involved in the assembly of lipopolysaccharide (LPS) at the surface of the outer membrane. This chain is LPS-assembly protein LptD, found in Cupriavidus metallidurans (strain ATCC 43123 / DSM 2839 / NBRC 102507 / CH34) (Ralstonia metallidurans).